We begin with the raw amino-acid sequence, 458 residues long: MSNELRLEDNYVPTSDTLVVFKQLMKLPVTVLYDLTLSWFAKFGGSFDGDIYLLTETLDLLIEKGVRRNVIVNRILYVYWPDGLNVFQLAEIDCHLMISKPEKFKWLPSKALRGDGKPYVVKLQPAKFIENLQTDLAKIYHCHVYMFKHPSLPVLITRIQLFDSNNLFLSTPNIGSINKESLYNKLDKFQGKPLISRRPYYVAFPLNSPIIFHSVDKDIYARLVLQSISRTISERETIIFKPVQKIPVKSIHNIMTLLGPSRFAESMGPWECYASANFERSPLHDYKKHQGLTGKKVMVREFDDSFLNDDENFYGKEEPEIRRLRLEKNMIKFKGSANGVMDQKYNDLKEFNEHVHNIRNGKKNEDSGEPVYISRYSSLVPIEKVGFTLKNEINSRIITIKLKFNGNDIFGGLHELCDKNLINIDKVPGWLAGENGSFSGTIMNGDFQREQVAKGGLL.

This sequence belongs to the CENP-N/CHL4 family. As to quaternary structure, forms a heterodimer with IML3. CHL4-IML3 is part of a larger constitutive centromere-associated network (CCAN) (also known as central kinetochore CTF19 complex in yeast), which is composed of at least AME1, CHL4, CNN1, CTF3, CTF19, IML3, MCM16, MCM21, MCM22, MHF1, MHF2, MIF2, NKP1, NKP2, OKP1 and WIP1. Interacts with CTF3 and CTF19.

It is found in the nucleus. It localises to the chromosome. Its subcellular location is the centromere. The protein localises to the kinetochore. Component of the kinetochore, a multiprotein complex that assembles on centromeric DNA and attaches chromosomes to spindle microtubules, mediating chromosome segregation and sister chromatid segregation during meiosis and mitosis. Component of the inner kinetochore constitutive centromere-associated network (CCAN), which serves as a structural platform for outer kinetochore assembly. The chain is Inner kinetochore subunit CHL4 (CHL4) from Saccharomyces cerevisiae (strain ATCC 204508 / S288c) (Baker's yeast).